The sequence spans 337 residues: DNA-directed RNA polymerase subunit alpha (337 aa).

The segment at 1 to 233 (MVREEVVGST…DLFIPFLHAE (233 aa)) is alpha N-terminal domain (alpha-NTD). The alpha C-terminal domain (alpha-CTD) stretch occupies residues 265–337 (KEIALKCIFI…FAIDLPKNKF (73 aa)).

Belongs to the RNA polymerase alpha chain family. In terms of assembly, in plastids the minimal PEP RNA polymerase catalytic core is composed of four subunits: alpha, beta, beta', and beta''. When a (nuclear-encoded) sigma factor is associated with the core the holoenzyme is formed, which can initiate transcription.

It localises to the plastid. The protein resides in the chloroplast. It carries out the reaction RNA(n) + a ribonucleoside 5'-triphosphate = RNA(n+1) + diphosphate. Its function is as follows. DNA-dependent RNA polymerase catalyzes the transcription of DNA into RNA using the four ribonucleoside triphosphates as substrates. The sequence is that of DNA-directed RNA polymerase subunit alpha from Acorus gramineus (Dwarf sweet flag).